Here is a 41-residue protein sequence, read N- to C-terminus: Photosystem I reaction center subunit IX (41 aa).

A helical membrane pass occupies residues 7 to 27 (YLSTAPVVATGWFIVTAALLI).

It belongs to the PsaJ family.

The protein localises to the plastid. Its subcellular location is the chloroplast thylakoid membrane. In terms of biological role, may help in the organization of the PsaE and PsaF subunits. The polypeptide is Photosystem I reaction center subunit IX (Tetradesmus obliquus (Green alga)).